The chain runs to 108 residues: Iron-sulfur cluster assembly protein CyaY (108 aa).

The protein belongs to the frataxin family.

Its function is as follows. Involved in iron-sulfur (Fe-S) cluster assembly. May act as a regulator of Fe-S biogenesis. In Burkholderia vietnamiensis (strain G4 / LMG 22486) (Burkholderia cepacia (strain R1808)), this protein is Iron-sulfur cluster assembly protein CyaY.